The chain runs to 562 residues: Dihydroxy-acid dehydratase 1 (562 aa).

Mg(2+) is bound at residue Asp-80. Cys-121 is a binding site for [2Fe-2S] cluster. Positions 122 and 123 each coordinate Mg(2+). At Lys-123 the chain carries N6-carboxylysine. A [2Fe-2S] cluster-binding site is contributed by Cys-194. Glu-446 serves as a coordination point for Mg(2+). Catalysis depends on Ser-472, which acts as the Proton acceptor.

This sequence belongs to the IlvD/Edd family. As to quaternary structure, homodimer. The cofactor is [2Fe-2S] cluster. Mg(2+) is required as a cofactor.

It carries out the reaction (2R)-2,3-dihydroxy-3-methylbutanoate = 3-methyl-2-oxobutanoate + H2O. The catalysed reaction is (2R,3R)-2,3-dihydroxy-3-methylpentanoate = (S)-3-methyl-2-oxopentanoate + H2O. Its pathway is amino-acid biosynthesis; L-isoleucine biosynthesis; L-isoleucine from 2-oxobutanoate: step 3/4. It functions in the pathway amino-acid biosynthesis; L-valine biosynthesis; L-valine from pyruvate: step 3/4. Functionally, functions in the biosynthesis of branched-chain amino acids. Catalyzes the dehydration of (2R,3R)-2,3-dihydroxy-3-methylpentanoate (2,3-dihydroxy-3-methylvalerate) into 2-oxo-3-methylpentanoate (2-oxo-3-methylvalerate) and of (2R)-2,3-dihydroxy-3-methylbutanoate (2,3-dihydroxyisovalerate) into 2-oxo-3-methylbutanoate (2-oxoisovalerate), the penultimate precursor to L-isoleucine and L-valine, respectively. The chain is Dihydroxy-acid dehydratase 1 from Staphylococcus saprophyticus subsp. saprophyticus (strain ATCC 15305 / DSM 20229 / NCIMB 8711 / NCTC 7292 / S-41).